Here is a 379-residue protein sequence, read N- to C-terminus: Zinc metalloproteinase nas-20 (379 aa).

The N-terminal stretch at 1 to 20 is a signal peptide; the sequence is MKITVNFLLVALIGVPSVLS. The propeptide occupies 21 to 29; sequence DRHITRDKR. A Peptidase M12A domain is found at 30–208; it reads QAMRDYAKWE…VLLNKFYGCN (179 aa). N-linked (GlcNAc...) asparagine glycosylation is present at Asn-67. Disulfide bonds link Cys-70–Cys-207, Cys-91–Cys-111, Cys-209–Cys-229, and Cys-234–Cys-243. His-119 serves as a coordination point for Zn(2+). The active site involves Glu-120. Zn(2+)-binding residues include His-123 and His-129. Asn-185 is a glycosylation site (N-linked (GlcNAc...) asparagine). Residues 203 to 244 form the EGF-like domain; the sequence is KFYGCNCDNHPRKLDCKNGGYQNPANCEECLCTDGFNGQLCD. N-linked (GlcNAc...) asparagine glycosylation is found at Asn-337 and Asn-370.

Zn(2+) serves as cofactor.

It localises to the secreted. Metalloprotease. The polypeptide is Zinc metalloproteinase nas-20 (nas-20) (Caenorhabditis elegans).